The sequence spans 110 residues: Late cornified envelope protein 2D (110 aa).

The protein belongs to the LCE family. As to expression, skin-specific. Expression was readily detected in adult trunk skin, adult arm skin, fetal skin, penal skin, vulva, esophagus and tongue. Not expressed in the cervix, rectum, lung, colon, or placenta.

In terms of biological role, precursors of the cornified envelope of the stratum corneum. The chain is Late cornified envelope protein 2D (LCE2D) from Homo sapiens (Human).